We begin with the raw amino-acid sequence, 338 residues long: MLMKINEGKNYVELTVERVEDLFILYLILKPGDLVYSWTVREVRGRSGERFGREKVYLGVRVRDLEFHEPRGVLRIRGIIEDYPEWLEGAGGSYHSLEVGIGSTLKIMRSINRDYLEQLINTLSSGIKVLIVSVSIEETTVALATRLGVSIIATISNNYIQGKESGGSLINQRYIDDVSKVVRQLTEVHKPNALIIATQGMLMSSIPDIEVKGVPVERVIVSEGGLSGIYEVERRGYLDKVGLKLGYDTVNRIMEELSKGSGLVALGDEIYEALSMGAVDSLVMLDKLLIEKAEESRRIIDDCIRTRAKLIIVPDGSEAGKLLNGLGGLAALLRFRIK.

The protein belongs to the eukaryotic release factor 1 family. Pelota subfamily. Monomer. It depends on a divalent metal cation as a cofactor.

It localises to the cytoplasm. May function in recognizing stalled ribosomes, interact with stem-loop structures in stalled mRNA molecules, and effect endonucleolytic cleavage of the mRNA. May play a role in the release non-functional ribosomes and degradation of damaged mRNAs. Has endoribonuclease activity. The polypeptide is Protein pelota homolog (Caldivirga maquilingensis (strain ATCC 700844 / DSM 13496 / JCM 10307 / IC-167)).